Here is a 200-residue protein sequence, read N- to C-terminus: Imidazoleglycerol-phosphate dehydratase (200 aa).

It belongs to the imidazoleglycerol-phosphate dehydratase family.

The protein localises to the cytoplasm. It carries out the reaction D-erythro-1-(imidazol-4-yl)glycerol 3-phosphate = 3-(imidazol-4-yl)-2-oxopropyl phosphate + H2O. Its pathway is amino-acid biosynthesis; L-histidine biosynthesis; L-histidine from 5-phospho-alpha-D-ribose 1-diphosphate: step 6/9. The polypeptide is Imidazoleglycerol-phosphate dehydratase (Chlorobium phaeobacteroides (strain DSM 266 / SMG 266 / 2430)).